The sequence spans 55 residues: Large ribosomal subunit protein bL33 (55 aa).

This sequence belongs to the bacterial ribosomal protein bL33 family.

This is Large ribosomal subunit protein bL33 from Baumannia cicadellinicola subsp. Homalodisca coagulata.